Reading from the N-terminus, the 228-residue chain is uncharacterized protein (228 aa).

The next 5 membrane-spanning stretches (helical) occupy residues 14-34 (HTIS…MLLA), 42-62 (VALF…AITL), 130-150 (FMFS…LVGS), 156-176 (FSFD…VLFM), and 192-212 (IAIA…LIAL).

This sequence belongs to the AzlC family.

The protein localises to the cell membrane. This is an uncharacterized protein from Helicobacter pylori (strain J99 / ATCC 700824) (Campylobacter pylori J99).